The following is a 299-amino-acid chain: Glutamyl-Q tRNA(Asp) synthetase (299 aa).

L-glutamate contacts are provided by residues 9–13 (RFAPS) and E45. The 'HIGH' region motif lies at 12–22 (PSPTGPLHFGS). Positions 101, 103, and 118 each coordinate Zn(2+). L-glutamate is bound by residues Y170 and R188. The 'KMSKS' region signature appears at 226 to 230 (KLSKS). K229 contributes to the ATP binding site. The interval 279–299 (QLLPRQRQRDRATCAYERQRD) is disordered. A compositionally biased stretch (basic and acidic residues) spans 285-299 (RQRDRATCAYERQRD).

Belongs to the class-I aminoacyl-tRNA synthetase family. GluQ subfamily. It depends on Zn(2+) as a cofactor.

Its function is as follows. Catalyzes the tRNA-independent activation of glutamate in presence of ATP and the subsequent transfer of glutamate onto a tRNA(Asp). Glutamate is transferred on the 2-amino-5-(4,5-dihydroxy-2-cyclopenten-1-yl) moiety of the queuosine in the wobble position of the QUC anticodon. In Xanthomonas oryzae pv. oryzae (strain KACC10331 / KXO85), this protein is Glutamyl-Q tRNA(Asp) synthetase.